The sequence spans 442 residues: Syndecan-3 (442 aa).

Disordered regions lie at residues Met1–Ala25 and Arg55–Phe85. The signal sequence occupies residues Met1–Gly44. At Ala45 to Val387 the chain is on the extracellular side. Acidic residues predominate over residues Gly61–Asp75. Residues Ser78, Ser80, Ser82, and Ser89 are each glycosylated (O-linked (Xyl...) (glycosaminoglycan) serine). A glycan (O-linked (GalNAc) threonine; by GALNT13) is linked at Thr107. Disordered stretches follow at residues Glu151–Pro175, Ala180–Ala199, Ala225–Ala244, Thr252–Pro327, and Ala339–Ala372. Positions Ala157–Pro175 are enriched in low complexity. O-linked (GalNAc) serine; by GALNT13 glycosylation occurs at Ser161. O-linked (GalNAc) threonine; by GALNT13 glycosylation is found at Thr162, Thr163, Thr170, and Thr172. The span at Thr276–Thr287 shows a compositional bias: low complexity. Residues Val289 to Gln303 are compositionally biased toward polar residues. O-linked (Xyl...) (glycosaminoglycan) serine glycosylation is found at Ser315 and Ser367. The chain crosses the membrane as a helical span at residues Ala388 to Ile408. Phosphotyrosine occurs at positions 409, 419, 431, and 441. The Cytoplasmic portion of the chain corresponds to Tyr409–Ala442. Residues Tyr419–Ala442 form a disordered region. The segment covering Lys433–Ala442 has biased composition (basic and acidic residues).

It belongs to the syndecan proteoglycan family. As to quaternary structure, interacts with TIAM1. Interacts (via heparan sulfate chains) with PTN; this interaction mediates the neurite outgrowth-promoting signal from PTN to the cytoskeleton of growing neurites; this interaction mediates osteoblast recruitment. Interacts with MDK; this interaction induces SDC3 clustering; this interaction induces neuronal cell adhesion and neurite outgrowth. In terms of processing, O-glycosylated within the Thr/Ser-rich region which could interact with lectin domains on other molecules. High levels in neonatal brain, heart, and Schwann cells, barely detectable in neonatal or adult liver, or adult brain.

The protein resides in the cell membrane. Its function is as follows. Cell surface proteoglycan that may bear heparan sulfate. May have a role in the organization of cell shape by affecting the actin cytoskeleton, possibly by transferring signals from the cell surface in a sugar-dependent mechanism. This Rattus norvegicus (Rat) protein is Syndecan-3 (Sdc3).